The chain runs to 422 residues: Serine hydroxymethyltransferase 2 (422 aa).

(6S)-5,6,7,8-tetrahydrofolate contacts are provided by residues Leu121 and 125–127; that span reads GHL. At Lys230 the chain carries N6-(pyridoxal phosphate)lysine.

The protein belongs to the SHMT family. In terms of assembly, homodimer. Pyridoxal 5'-phosphate is required as a cofactor.

The protein resides in the cytoplasm. It catalyses the reaction (6R)-5,10-methylene-5,6,7,8-tetrahydrofolate + glycine + H2O = (6S)-5,6,7,8-tetrahydrofolate + L-serine. Its pathway is one-carbon metabolism; tetrahydrofolate interconversion. The protein operates within amino-acid biosynthesis; glycine biosynthesis; glycine from L-serine: step 1/1. Functionally, catalyzes the reversible interconversion of serine and glycine with tetrahydrofolate (THF) serving as the one-carbon carrier. This reaction serves as the major source of one-carbon groups required for the biosynthesis of purines, thymidylate, methionine, and other important biomolecules. Also exhibits THF-independent aldolase activity toward beta-hydroxyamino acids, producing glycine and aldehydes, via a retro-aldol mechanism. The sequence is that of Serine hydroxymethyltransferase 2 from Agrobacterium fabrum (strain C58 / ATCC 33970) (Agrobacterium tumefaciens (strain C58)).